Here is a 155-residue protein sequence, read N- to C-terminus: MTQDNSQAKAKAPAKSARRRARELALQGLYQWLLNRNDPGVVEAHLQDAQGFNKADRAHFDALLHGAIREETTLTEAFTPYLDRPVAELSPVERAALLVGAYELVHCVDIPYKVVINEAVELTKTFGGVEGYKYVNGVLDKLATQVRAVEVAARR.

This sequence belongs to the NusB family.

Its function is as follows. Involved in transcription antitermination. Required for transcription of ribosomal RNA (rRNA) genes. Binds specifically to the boxA antiterminator sequence of the ribosomal RNA (rrn) operons. This chain is Transcription antitermination protein NusB, found in Ralstonia pickettii (strain 12J).